The sequence spans 31 residues: Diuretic hormone class 2 (31 aa).

P31 bears the Proline amide mark.

It belongs to the diuretic hormone class 2 family.

The protein resides in the secreted. Its function is as follows. Regulation of fluid secretion. Stimulates primary urine secretion by Malpighian tubules and causes a dose-dependent stimulation of cAMP levels in the tubules. Has a nonselective effect on Na(+)/K(+) ion transport. In vitro, primarily elevates intracellular Ca(2+). In Apis mellifera (Honeybee), this protein is Diuretic hormone class 2.